The sequence spans 461 residues: Piperine synthase (461 aa).

Catalysis depends on proton acceptor residues histidine 168 and aspartate 387. Residues 459–461 (SRM) carry the Microbody targeting signal motif.

It belongs to the plant acyltransferase family. Monomer. Confined to immature fruits perisperm. Also detectable in roots.

It localises to the cytoplasm. The enzyme catalyses piperidine + (E,E)-piperoyl-CoA = piperine + CoA + H(+). It carries out the reaction pyrrolidine + (E,E)-piperoyl-CoA = piperyline + CoA + H(+). It catalyses the reaction (E,E)-piperoyl-CoA + 2-methylpropan-1-amine = (E,E)-piperlonguminine + CoA + H(+). Its pathway is aromatic compound metabolism. Involved in the biosynthesis of aromatic piperamides natural products such as piperine (1-piperoyl-piperidine), the pungent principle contributing, together with several terpenoids, to the aromatic properties of black pepper fruits, and displaying numerous pharmacological activities such as antiproliferative, antitumor, antiangiogenesis, antioxidant, antidiabetic, antiobesity, cardioprotective, antimicrobial, antiaging, and immunomodulatory effects. Mediates mainly the conversion of piperidine and piperoyl-CoA to piperine. Can also use pyrrolidine and isobutylamine as acceptors and 3,4-methylenedioxycinnamoyl-CoA as an alternative CoA-donor with a lower efficiency. The protein is Piperine synthase of Piper nigrum (Black pepper).